Reading from the N-terminus, the 689-residue chain is Glycine--tRNA ligase beta subunit (689 aa).

The protein belongs to the class-II aminoacyl-tRNA synthetase family. As to quaternary structure, tetramer of two alpha and two beta subunits.

The protein resides in the cytoplasm. It carries out the reaction tRNA(Gly) + glycine + ATP = glycyl-tRNA(Gly) + AMP + diphosphate. This is Glycine--tRNA ligase beta subunit from Glaesserella parasuis serovar 5 (strain SH0165) (Haemophilus parasuis).